The chain runs to 83 residues: Small ribosomal subunit protein uS17 (83 aa).

This sequence belongs to the universal ribosomal protein uS17 family. As to quaternary structure, part of the 30S ribosomal subunit.

One of the primary rRNA binding proteins, it binds specifically to the 5'-end of 16S ribosomal RNA. The sequence is that of Small ribosomal subunit protein uS17 from Aliarcobacter butzleri (strain RM4018) (Arcobacter butzleri).